The primary structure comprises 718 residues: Phenylalanine--tRNA ligase beta subunit (718 aa).

A tRNA-binding domain is found at 40–153 (FLNVSKIKFG…KADLKQDPID (114 aa)). One can recognise a B5 domain in the interval 387 to 462 (DKKESFNFVW…RFYGYENLVF (76 aa)). The Mg(2+) site is built by Asp-440, Asp-446, Glu-449, and Glu-450.

It belongs to the phenylalanyl-tRNA synthetase beta subunit family. Type 1 subfamily. In terms of assembly, tetramer of two alpha and two beta subunits. Mg(2+) is required as a cofactor.

The protein resides in the cytoplasm. The enzyme catalyses tRNA(Phe) + L-phenylalanine + ATP = L-phenylalanyl-tRNA(Phe) + AMP + diphosphate + H(+). The polypeptide is Phenylalanine--tRNA ligase beta subunit (Mycoplasmopsis pulmonis (strain UAB CTIP) (Mycoplasma pulmonis)).